A 730-amino-acid chain; its full sequence is Kinesin-like protein KIF2C (730 aa).

The tract at residues 1–256 (MERLVATRLV…MDCHRISMAD (256 aa)) is globular. The segment at 79–98 (NMPPQRNVSSQNHKRKTISK) is disordered. A negative regulator of microtubule-binding region spans residues 211–242 (EQRAQNYERRMKRAQDYDTSVPNWEFGKMIKE). The 331-residue stretch at 262-592 (RICVCVRKRP…LRYADRVKEL (331 aa)) folds into the Kinesin motor domain. ATP-binding positions include Arg268 and 352 to 359 (GQTGSGKT). A coiled-coil region spans residues 599–730 (TNDDNLQMED…QISKKKRSNK (132 aa)).

The protein belongs to the TRAFAC class myosin-kinesin ATPase superfamily. Kinesin family. MCAK/KIF2 subfamily.

Its subcellular location is the cytoplasm. It localises to the cytoskeleton. The protein localises to the nucleus. The protein resides in the chromosome. It is found in the centromere. Its subcellular location is the kinetochore. Promotes ATP-dependent removal of tubulin dimers from microtubules. Regulates the turnover of microtubules at the kinetochore and functions in chromosome segregation during mitosis. May play a role in chromosome congression and may be required for the lateral to end-on conversion of the chromosome-microtubule attachment. The protein is Kinesin-like protein KIF2C (kif2c) of Xenopus laevis (African clawed frog).